A 513-amino-acid polypeptide reads, in one-letter code: Zinc finger protein 395 (513 aa).

Positions 17-29 (ARVLGPSASEGPS) are enriched in low complexity. The interval 17 to 56 (ARVLGPSASEGPSAAPPSEPLLEGAAPQPFTTSDDTPCQE) is disordered. Positions 45–55 (PFTTSDDTPCQ) are enriched in polar residues. The short motif at 165 to 174 (MDEMMAAMVL) is the Nuclear export signal element. The interval 204 to 269 (KESGDISDSG…DPFLLDEPAP (66 aa)) is disordered. Positions 209–229 (ISDSGSSTTSGHWSGSSGVST) are enriched in low complexity. A Phosphoserine modification is found at S248. Residues 280-305 (YKCLWPNCGKVLRSIVGIKRHVKALH) form a C2H2-type zinc finger. The segment at 335–394 (AAAAAAAGTPVPGTPTSEPAPTPSMTGLPLSALPPPLHKAQSSGPEHPGPESSLPSGALS) is disordered. The span at 348 to 359 (TPTSEPAPTPSM) shows a compositional bias: polar residues. S376 and S449 each carry phosphoserine. Residues 376 to 391 (SSGPEHPGPESSLPSG) are compositionally biased toward low complexity.

In terms of assembly, interacts with repression-mediating E2 binding site P2 of human papillomavirus type 8 (HPV8). As to expression, widely expressed.

The protein localises to the cytoplasm. It localises to the nucleus. In terms of biological role, plays a role in papillomavirus genes transcription. The chain is Zinc finger protein 395 (ZNF395) from Homo sapiens (Human).